The primary structure comprises 250 residues: Cell division protein ZapD (250 aa).

Belongs to the ZapD family. In terms of assembly, interacts with FtsZ.

It localises to the cytoplasm. In terms of biological role, cell division factor that enhances FtsZ-ring assembly. Directly interacts with FtsZ and promotes bundling of FtsZ protofilaments, with a reduction in FtsZ GTPase activity. The sequence is that of Cell division protein ZapD from Serratia proteamaculans (strain 568).